A 181-amino-acid chain; its full sequence is Peptidyl-tRNA hydrolase (181 aa).

Y14 serves as a coordination point for tRNA. H19 functions as the Proton acceptor in the catalytic mechanism. TRNA-binding residues include Y62, N64, and N108.

Belongs to the PTH family. In terms of assembly, monomer.

The protein resides in the cytoplasm. The enzyme catalyses an N-acyl-L-alpha-aminoacyl-tRNA + H2O = an N-acyl-L-amino acid + a tRNA + H(+). Hydrolyzes ribosome-free peptidyl-tRNAs (with 1 or more amino acids incorporated), which drop off the ribosome during protein synthesis, or as a result of ribosome stalling. Its function is as follows. Catalyzes the release of premature peptidyl moieties from peptidyl-tRNA molecules trapped in stalled 50S ribosomal subunits, and thus maintains levels of free tRNAs and 50S ribosomes. The polypeptide is Peptidyl-tRNA hydrolase (Campylobacter jejuni subsp. jejuni serotype O:23/36 (strain 81-176)).